The following is a 92-amino-acid chain: MARSTKKGPFIDGHLMKKVLAAKEAGDKKPIKTWSRRSVIFPEFIGLTINVHNGRQFIPVFITENHVGYKLGEFAPTRTFKGHKGSVQKKVG.

This sequence belongs to the universal ribosomal protein uS19 family.

Functionally, protein S19 forms a complex with S13 that binds strongly to the 16S ribosomal RNA. This chain is Small ribosomal subunit protein uS19, found in Sulfurovum sp. (strain NBC37-1).